A 25-amino-acid polypeptide reads, in one-letter code: Bifunctional chitinase/lysozyme (25 aa).

The protein belongs to the glycosyl hydrolase 19 family. Chitinase class I subfamily. Monomer.

The protein localises to the secreted. It is found in the extracellular space. The catalysed reaction is Random endo-hydrolysis of N-acetyl-beta-D-glucosaminide (1-&gt;4)-beta-linkages in chitin and chitodextrins.. It carries out the reaction Hydrolysis of (1-&gt;4)-beta-linkages between N-acetylmuramic acid and N-acetyl-D-glucosamine residues in a peptidoglycan and between N-acetyl-D-glucosamine residues in chitodextrins.. Its function is as follows. Bifunctional enzyme with lysozyme/chitinase activity. This chain is Bifunctional chitinase/lysozyme, found in Carica papaya (Papaya).